We begin with the raw amino-acid sequence, 629 residues long: tRNA uridine 5-carboxymethylaminomethyl modification enzyme MnmG (629 aa).

13-18 (GGGHAG) contacts FAD. 273–287 (GPRYCPSIEDKIHRF) provides a ligand contact to NAD(+).

This sequence belongs to the MnmG family. In terms of assembly, homodimer. Heterotetramer of two MnmE and two MnmG subunits. Requires FAD as cofactor.

Its subcellular location is the cytoplasm. In terms of biological role, NAD-binding protein involved in the addition of a carboxymethylaminomethyl (cmnm) group at the wobble position (U34) of certain tRNAs, forming tRNA-cmnm(5)s(2)U34. The polypeptide is tRNA uridine 5-carboxymethylaminomethyl modification enzyme MnmG (Shewanella baltica (strain OS185)).